Consider the following 223-residue polypeptide: 2-C-methyl-D-erythritol 4-phosphate cytidylyltransferase (223 aa).

It belongs to the IspD/TarI cytidylyltransferase family. IspD subfamily.

The catalysed reaction is 2-C-methyl-D-erythritol 4-phosphate + CTP + H(+) = 4-CDP-2-C-methyl-D-erythritol + diphosphate. Its pathway is isoprenoid biosynthesis; isopentenyl diphosphate biosynthesis via DXP pathway; isopentenyl diphosphate from 1-deoxy-D-xylulose 5-phosphate: step 2/6. In terms of biological role, catalyzes the formation of 4-diphosphocytidyl-2-C-methyl-D-erythritol from CTP and 2-C-methyl-D-erythritol 4-phosphate (MEP). This Synechococcus sp. (strain WH7803) protein is 2-C-methyl-D-erythritol 4-phosphate cytidylyltransferase.